The primary structure comprises 629 residues: tRNA uridine 5-carboxymethylaminomethyl modification enzyme MnmG (629 aa).

Residues 15–20 (GAGHAG), V127, and S182 each bind FAD. Positions 203–226 (TPPRVKSSTIDYSKTEEQPGDDHP) are disordered. Over residues 215–226 (SKTEEQPGDDHP) the composition is skewed to basic and acidic residues. NAD(+) is bound at residue 274–288 (GARYCPSIEDKIVRF). Q371 provides a ligand contact to FAD.

Belongs to the MnmG family. Homodimer. Heterotetramer of two MnmE and two MnmG subunits. The cofactor is FAD.

It localises to the cytoplasm. Functionally, NAD-binding protein involved in the addition of a carboxymethylaminomethyl (cmnm) group at the wobble position (U34) of certain tRNAs, forming tRNA-cmnm(5)s(2)U34. This is tRNA uridine 5-carboxymethylaminomethyl modification enzyme MnmG from Listeria monocytogenes serovar 1/2a (strain ATCC BAA-679 / EGD-e).